Consider the following 209-residue polypeptide: MKILQVNSSARNFANGVGSVSSQLAGELVARLRDGEPTASVVVRDLARTPHPVLDEAALQALFTPADQRTPAQAERVALDDALIAEIQAADVVVIAAPMFNFGITAQLKNWIDAIARAKVTFQYTANGPEGLLKGKRVHVVLTRGGVYRDQASDNQVPYLRQVLGFLGMTDVEFIYAERQGMGPEASAQGVAEAREQIAALLQLGTATA.

FMN is bound by residues Ser-9, 19-21 (SVS), and 143-146 (TRGG).

It belongs to the azoreductase type 1 family. As to quaternary structure, homodimer. It depends on FMN as a cofactor.

The catalysed reaction is 2 a quinone + NADH + H(+) = 2 a 1,4-benzosemiquinone + NAD(+). It carries out the reaction N,N-dimethyl-1,4-phenylenediamine + anthranilate + 2 NAD(+) = 2-(4-dimethylaminophenyl)diazenylbenzoate + 2 NADH + 2 H(+). In terms of biological role, quinone reductase that provides resistance to thiol-specific stress caused by electrophilic quinones. Functionally, also exhibits azoreductase activity. Catalyzes the reductive cleavage of the azo bond in aromatic azo compounds to the corresponding amines. This Leptothrix cholodnii (strain ATCC 51168 / LMG 8142 / SP-6) (Leptothrix discophora (strain SP-6)) protein is FMN-dependent NADH:quinone oxidoreductase.